We begin with the raw amino-acid sequence, 520 residues long: Pleckstrin homology domain-containing family A member 8 (520 aa).

Residues 1-93 enclose the PH domain; it reads MEGVLYKWTN…WLVALGSAKA (93 aa). The residue at position 139 (threonine 139) is a Phosphothreonine. Serine 145 carries the post-translational modification Phosphoserine. Position 153 is a phosphothreonine (threonine 153). Positions 275–285 are enriched in basic and acidic residues; sequence GEESLGNHDSD. The disordered stretch occupies residues 275–305; that stretch reads GEESLGNHDSDLAQPELHSTSSSPESHWEED. The segment at 311 to 520 is glycolipid transfer protein homology domain; sequence TFFSTMNTSF…VHGLESDEVV (210 aa).

Homodimer. Interacts with ARF1; the interaction together with phosphatidylinositol 4-phosphate binding is required for FAPP2 GlcCer transfer ability.

The protein localises to the cytoplasm. It is found in the golgi apparatus. It localises to the trans-Golgi network membrane. Its subcellular location is the membrane. Cargo transport protein that is required for apical transport from the trans-Golgi network (TGN). Transports AQP2 from the trans-Golgi network (TGN) to sites of AQP2 phosphorylation. Mediates the non-vesicular transport of glucosylceramide (GlcCer) from the trans-Golgi network (TGN) to the plasma membrane and plays a pivotal role in the synthesis of complex glycosphingolipids. Binding of both phosphatidylinositol 4-phosphate (PIP) and ARF1 are essential for the GlcCer transfer ability. Also required for primary cilium formation, possibly by being involved in the transport of raft lipids to the apical membrane, and for membrane tubulation. This chain is Pleckstrin homology domain-containing family A member 8 (PLEKHA8), found in Bos taurus (Bovine).